Here is a 131-residue protein sequence, read N- to C-terminus: Holo-[acyl-carrier-protein] synthase (131 aa).

Mg(2+) contacts are provided by aspartate 8 and glutamate 63.

This sequence belongs to the P-Pant transferase superfamily. AcpS family. Mg(2+) serves as cofactor.

It localises to the cytoplasm. The catalysed reaction is apo-[ACP] + CoA = holo-[ACP] + adenosine 3',5'-bisphosphate + H(+). Transfers the 4'-phosphopantetheine moiety from coenzyme A to a Ser of acyl-carrier-protein. This is Holo-[acyl-carrier-protein] synthase from Shewanella pealeana (strain ATCC 700345 / ANG-SQ1).